Here is a 360-residue protein sequence, read N- to C-terminus: Phosphoserine aminotransferase (360 aa).

Position 41 (R41) interacts with L-glutamate. Residues W101, T152, D172, and Q195 each contribute to the pyridoxal 5'-phosphate site. K196 bears the N6-(pyridoxal phosphate)lysine mark. 237-238 (NT) contributes to the pyridoxal 5'-phosphate binding site.

Belongs to the class-V pyridoxal-phosphate-dependent aminotransferase family. SerC subfamily. In terms of assembly, homodimer. The cofactor is pyridoxal 5'-phosphate.

The protein localises to the cytoplasm. The enzyme catalyses O-phospho-L-serine + 2-oxoglutarate = 3-phosphooxypyruvate + L-glutamate. The catalysed reaction is 4-(phosphooxy)-L-threonine + 2-oxoglutarate = (R)-3-hydroxy-2-oxo-4-phosphooxybutanoate + L-glutamate. It participates in amino-acid biosynthesis; L-serine biosynthesis; L-serine from 3-phospho-D-glycerate: step 2/3. It functions in the pathway cofactor biosynthesis; pyridoxine 5'-phosphate biosynthesis; pyridoxine 5'-phosphate from D-erythrose 4-phosphate: step 3/5. Functionally, catalyzes the reversible conversion of 3-phosphohydroxypyruvate to phosphoserine and of 3-hydroxy-2-oxo-4-phosphonooxybutanoate to phosphohydroxythreonine. In Paraburkholderia phytofirmans (strain DSM 17436 / LMG 22146 / PsJN) (Burkholderia phytofirmans), this protein is Phosphoserine aminotransferase.